The sequence spans 271 residues: 4-hydroxy-tetrahydrodipicolinate reductase (271 aa).

Residues 12-17 and E38 each bind NAD(+); that span reads GGSGRM. NADP(+) is bound at residue R39. NAD(+)-binding positions include 102 to 104 and 126 to 129; these read GTT and APNM. H159 functions as the Proton donor/acceptor in the catalytic mechanism. A (S)-2,3,4,5-tetrahydrodipicolinate-binding site is contributed by H160. K163 serves as the catalytic Proton donor. (S)-2,3,4,5-tetrahydrodipicolinate is bound at residue 169-170; the sequence is GT.

This sequence belongs to the DapB family.

Its subcellular location is the cytoplasm. It carries out the reaction (S)-2,3,4,5-tetrahydrodipicolinate + NAD(+) + H2O = (2S,4S)-4-hydroxy-2,3,4,5-tetrahydrodipicolinate + NADH + H(+). It catalyses the reaction (S)-2,3,4,5-tetrahydrodipicolinate + NADP(+) + H2O = (2S,4S)-4-hydroxy-2,3,4,5-tetrahydrodipicolinate + NADPH + H(+). Its pathway is amino-acid biosynthesis; L-lysine biosynthesis via DAP pathway; (S)-tetrahydrodipicolinate from L-aspartate: step 4/4. Catalyzes the conversion of 4-hydroxy-tetrahydrodipicolinate (HTPA) to tetrahydrodipicolinate. This chain is 4-hydroxy-tetrahydrodipicolinate reductase, found in Shewanella sediminis (strain HAW-EB3).